The chain runs to 254 residues: 5'/3'-nucleotidase SurE (254 aa).

Positions 9, 10, 40, and 93 each coordinate a divalent metal cation.

This sequence belongs to the SurE nucleotidase family. A divalent metal cation is required as a cofactor.

The protein localises to the cytoplasm. The enzyme catalyses a ribonucleoside 5'-phosphate + H2O = a ribonucleoside + phosphate. The catalysed reaction is a ribonucleoside 3'-phosphate + H2O = a ribonucleoside + phosphate. It carries out the reaction [phosphate](n) + H2O = [phosphate](n-1) + phosphate + H(+). Its function is as follows. Nucleotidase with a broad substrate specificity as it can dephosphorylate various ribo- and deoxyribonucleoside 5'-monophosphates and ribonucleoside 3'-monophosphates with highest affinity to 3'-AMP. Also hydrolyzes polyphosphate (exopolyphosphatase activity) with the preference for short-chain-length substrates (P20-25). Might be involved in the regulation of dNTP and NTP pools, and in the turnover of 3'-mononucleotides produced by numerous intracellular RNases (T1, T2, and F) during the degradation of various RNAs. The chain is 5'/3'-nucleotidase SurE from Yersinia pseudotuberculosis serotype O:1b (strain IP 31758).